The primary structure comprises 321 residues: Putative ribose-phosphate pyrophosphokinase 2 (321 aa).

ATP contacts are provided by residues 43 to 45 (DGE) and 102 to 103 (RQ). Residues His136 and Asp176 each contribute to the Mg(2+) site. Asp225 contributes to the D-ribose 5-phosphate binding site.

Belongs to the ribose-phosphate pyrophosphokinase family. Class I subfamily. Homohexamer. It depends on Mg(2+) as a cofactor.

It is found in the cytoplasm. The enzyme catalyses D-ribose 5-phosphate + ATP = 5-phospho-alpha-D-ribose 1-diphosphate + AMP + H(+). Its pathway is metabolic intermediate biosynthesis; 5-phospho-alpha-D-ribose 1-diphosphate biosynthesis; 5-phospho-alpha-D-ribose 1-diphosphate from D-ribose 5-phosphate (route I): step 1/1. Its function is as follows. Involved in the biosynthesis of the central metabolite phospho-alpha-D-ribosyl-1-pyrophosphate (PRPP) via the transfer of pyrophosphoryl group from ATP to 1-hydroxyl of ribose-5-phosphate (Rib-5-P). The sequence is that of Putative ribose-phosphate pyrophosphokinase 2 from Lactiplantibacillus plantarum (strain ATCC BAA-793 / NCIMB 8826 / WCFS1) (Lactobacillus plantarum).